A 138-amino-acid polypeptide reads, in one-letter code: Flagellar basal body rod protein FlgB (138 aa).

It belongs to the flagella basal body rod proteins family. The basal body constitutes a major portion of the flagellar organelle and consists of a number of rings mounted on a central rod. In Gram-negative bacteria, at least four rings, L, P, S and M are present, whereas Gram-positive bacteria lack the L and P rings. The rod consists of about 26 subunits of FlgG in the distal portion, and FlgB, FlgC and FlgF build up the proximal portion of the rod with about 6 subunits each. Rod assembly occurs by export via the flagellum-specific pathway of its constituent proteins and by their incorporation into the rod structure in the probable order of FlgB, FlgC, FlgF and FlgG. Another protein, FliE, also assembles onto the stable rod structure.

It is found in the bacterial flagellum basal body. Functionally, structural component of flagellum, the bacterial motility apparatus. Part of the rod structure of flagellar basal body. This Escherichia coli (strain K12) protein is Flagellar basal body rod protein FlgB (flgB).